The sequence spans 307 residues: Bifunctional protein FolD (307 aa).

Residues 165-167 (GRS), serine 190, and isoleucine 231 each bind NADP(+).

Belongs to the tetrahydrofolate dehydrogenase/cyclohydrolase family. As to quaternary structure, homodimer.

The catalysed reaction is (6R)-5,10-methylene-5,6,7,8-tetrahydrofolate + NADP(+) = (6R)-5,10-methenyltetrahydrofolate + NADPH. The enzyme catalyses (6R)-5,10-methenyltetrahydrofolate + H2O = (6R)-10-formyltetrahydrofolate + H(+). The protein operates within one-carbon metabolism; tetrahydrofolate interconversion. Functionally, catalyzes the oxidation of 5,10-methylenetetrahydrofolate to 5,10-methenyltetrahydrofolate and then the hydrolysis of 5,10-methenyltetrahydrofolate to 10-formyltetrahydrofolate. The chain is Bifunctional protein FolD from Koribacter versatilis (strain Ellin345).